The primary structure comprises 141 residues: Venom protein family 1 protein 1 (141 aa).

An N-terminal signal peptide occupies residues 1–17; it reads MKSFIVVLCCLFAITYG. Cysteine 62 and cysteine 139 are joined by a disulfide.

Belongs to the insect vpf1 family. In terms of tissue distribution, expressed by the venom gland (posterior main gland) (at protein level).

The protein localises to the secreted. This Platymeris rhadamanthus (Red spot assassin bug) protein is Venom protein family 1 protein 1.